Reading from the N-terminus, the 192-residue chain is Molybdenum cofactor guanylyltransferase (192 aa).

GTP is bound by residues Lys21, Asp67, and Asp101. Mg(2+) is bound at residue Asp101.

It belongs to the MobA family. Monomer. Mg(2+) serves as cofactor.

It is found in the cytoplasm. It catalyses the reaction Mo-molybdopterin + GTP + H(+) = Mo-molybdopterin guanine dinucleotide + diphosphate. Transfers a GMP moiety from GTP to Mo-molybdopterin (Mo-MPT) cofactor (Moco or molybdenum cofactor) to form Mo-molybdopterin guanine dinucleotide (Mo-MGD) cofactor. The polypeptide is Molybdenum cofactor guanylyltransferase (Neisseria meningitidis serogroup C / serotype 2a (strain ATCC 700532 / DSM 15464 / FAM18)).